The primary structure comprises 800 residues: Protein SPT2 homolog (800 aa).

The interval 1–687 (MDFHSVLRMA…PGHRPNMQPP (687 aa)) is important for interaction with DNA. The stretch at 53-82 (QEIQNKEVEAKRKKEGLLAKRKELKHDRKA) forms a coiled coil. 3 disordered regions span residues 70 to 173 (LAKR…PALN), 197 to 646 (KEER…MAKP), and 661 to 698 (VPKS…TSSY). Positions 124 to 137 (TEEDEEYMTEEELY) are enriched in acidic residues. The span at 155–164 (PQKVAKAAPG) shows a compositional bias: low complexity. Positions 196-224 (KKEERLRTAEELKELEFLERKAQKADRKD) form a coiled coil. Basic and acidic residues-rich tracts occupy residues 197–226 (KEER…KDPM) and 249–259 (HSVEKRSHENS). The segment covering 260 to 272 (KSSSTEQNGTFRK) has biased composition (polar residues). The span at 273–295 (SSSDNRSREEKSGSVFHTKDSKF) shows a compositional bias: basic and acidic residues. Low complexity-rich tracts occupy residues 328–360 (SGST…SSGK), 367–377 (SSSARSSSGSG), 390–424 (GASG…SVGA), 443–501 (GVSG…SVSG), and 514–581 (GAPG…ASSS). A compositionally biased stretch (polar residues) spans 608–626 (NSVRHNTTSISVSARSSLG). Residues 684 to 693 (MQPPGRPLPP) are compositionally biased toward pro residues. Residues 688–800 (GRPLPPITSS…LKSAKKMKSR (113 aa)) are important for interaction with histones. Residues 756-800 (REQQKEEARSLRLGIQEDLEELRREEEELKQKAKQLKSAKKMKSR) adopt a coiled-coil conformation.

The protein belongs to the SPT2 family. In terms of assembly, interacts with histones. Interacts with a heterotetrameric complex formed by histone H3 and H4, especially when the histone tetramer is not bound to DNA.

It localises to the nucleus. It is found in the nucleolus. Its function is as follows. Histone chaperone that stabilizes pre-existing histone tetramers and regulates replication-independent histone exchange on chromatin. Required for normal chromatin refolding in the coding region of transcribed genes, and for the suppression of spurious transcription. Binds DNA and histones and promotes nucleosome assembly (in vitro). Facilitates formation of tetrameric histone complexes containing histone H3 and H4. Modulates RNA polymerase 1-mediated transcription. Binds DNA, with a preference for branched DNA species, such as Y-form DNA and Holliday junction DNA. This Xenopus laevis (African clawed frog) protein is Protein SPT2 homolog (spty2d1).